Here is a 591-residue protein sequence, read N- to C-terminus: Aspartate--tRNA(Asp/Asn) ligase (591 aa).

L-aspartate is bound at residue E175. Positions 199-202 (QQYK) are aspartate. Positions 221 and 450 each coordinate L-aspartate. 221 to 223 (RDE) is an ATP binding site. E484 is a binding site for ATP. R491 contributes to the L-aspartate binding site. 536 to 539 (GVDR) provides a ligand contact to ATP.

This sequence belongs to the class-II aminoacyl-tRNA synthetase family. Type 1 subfamily. In terms of assembly, homodimer.

The protein localises to the cytoplasm. The catalysed reaction is tRNA(Asx) + L-aspartate + ATP = L-aspartyl-tRNA(Asx) + AMP + diphosphate. In terms of biological role, aspartyl-tRNA synthetase with relaxed tRNA specificity since it is able to aspartylate not only its cognate tRNA(Asp) but also tRNA(Asn). Reaction proceeds in two steps: L-aspartate is first activated by ATP to form Asp-AMP and then transferred to the acceptor end of tRNA(Asp/Asn). The polypeptide is Aspartate--tRNA(Asp/Asn) ligase (Rhodopseudomonas palustris (strain TIE-1)).